A 241-amino-acid polypeptide reads, in one-letter code: Protocatechuate 3,4-dioxygenase beta chain (241 aa).

Fe cation-binding residues include Tyr109, Tyr148, His161, and His163.

This sequence belongs to the intradiol ring-cleavage dioxygenase family. As to quaternary structure, the enzyme is an oligomer of 12 copies of the alpha and beta chains. Fe(3+) is required as a cofactor.

It catalyses the reaction 3,4-dihydroxybenzoate + O2 = 3-carboxy-cis,cis-muconate + 2 H(+). The protein operates within aromatic compound metabolism; beta-ketoadipate pathway; 3-carboxy-cis,cis-muconate from 3,4-dihydroxybenzoate: step 1/1. Functionally, plays an essential role in the utilization of numerous aromatic and hydroaromatic compounds via the beta-ketoadipate pathway. The sequence is that of Protocatechuate 3,4-dioxygenase beta chain (pcaH) from Acinetobacter baylyi (strain ATCC 33305 / BD413 / ADP1).